We begin with the raw amino-acid sequence, 336 residues long: Biotin synthase (336 aa).

In terms of domain architecture, Radical SAM core spans 51 to 270 (NQVQCNQLLN…IALARIMMPK (220 aa)). [4Fe-4S] cluster contacts are provided by C66, C70, and C73. [2Fe-2S] cluster contacts are provided by C110, C141, C201, and R274.

Belongs to the radical SAM superfamily. Biotin synthase family. Homodimer. The cofactor is [4Fe-4S] cluster. Requires [2Fe-2S] cluster as cofactor.

It catalyses the reaction (4R,5S)-dethiobiotin + (sulfur carrier)-SH + 2 reduced [2Fe-2S]-[ferredoxin] + 2 S-adenosyl-L-methionine = (sulfur carrier)-H + biotin + 2 5'-deoxyadenosine + 2 L-methionine + 2 oxidized [2Fe-2S]-[ferredoxin]. It functions in the pathway cofactor biosynthesis; biotin biosynthesis; biotin from 7,8-diaminononanoate: step 2/2. Functionally, catalyzes the conversion of dethiobiotin (DTB) to biotin by the insertion of a sulfur atom into dethiobiotin via a radical-based mechanism. The protein is Biotin synthase of Rhodopseudomonas palustris (strain ATCC BAA-98 / CGA009).